The sequence spans 259 residues: Probable dihydroorotate dehydrogenase B (NAD(+)), electron transfer subunit (259 aa).

The FAD-binding FR-type domain maps to 1–89 (MLPLNATITQ…RGPFGKGFTL (89 aa)). Residues Cys-211, Cys-216, Cys-219, and Cys-229 each contribute to the [2Fe-2S] cluster site.

This sequence belongs to the PyrK family. As to quaternary structure, heterotetramer of 2 PyrK and 2 PyrD type B subunits. [2Fe-2S] cluster is required as a cofactor. It depends on FAD as a cofactor.

Its pathway is pyrimidine metabolism; UMP biosynthesis via de novo pathway; orotate from (S)-dihydroorotate (NAD(+) route): step 1/1. Functionally, responsible for channeling the electrons from the oxidation of dihydroorotate from the FMN redox center in the PyrD type B subunit to the ultimate electron acceptor NAD(+). The chain is Probable dihydroorotate dehydrogenase B (NAD(+)), electron transfer subunit from Methanosarcina mazei (strain ATCC BAA-159 / DSM 3647 / Goe1 / Go1 / JCM 11833 / OCM 88) (Methanosarcina frisia).